The chain runs to 241 residues: tRNA pseudouridine synthase A (241 aa).

Catalysis depends on D51, which acts as the Nucleophile. Substrate is bound at residue Y110.

It belongs to the tRNA pseudouridine synthase TruA family. As to quaternary structure, homodimer.

The catalysed reaction is uridine(38/39/40) in tRNA = pseudouridine(38/39/40) in tRNA. Its function is as follows. Formation of pseudouridine at positions 38, 39 and 40 in the anticodon stem and loop of transfer RNAs. In Campylobacter jejuni subsp. jejuni serotype O:2 (strain ATCC 700819 / NCTC 11168), this protein is tRNA pseudouridine synthase A.